The sequence spans 291 residues: uncharacterized protein (291 aa).

The DAGKc domain occupies 68-205 (PVAVSASFLW…VIQLWARPRG (138 aa)).

This is an uncharacterized protein from Mycobacterium tuberculosis (strain CDC 1551 / Oshkosh).